Here is a 187-residue protein sequence, read N- to C-terminus: Transcription antitermination protein NusB (187 aa).

The interval 135–187 (APAPESVAEEADEESSDSDAAASDPTDEGDVSDSSGASDEPAAPSAEIQPTVD) is disordered. A compositionally biased stretch (acidic residues) spans 141–151 (VAEEADEESSD).

It belongs to the NusB family.

Functionally, involved in transcription antitermination. Required for transcription of ribosomal RNA (rRNA) genes. Binds specifically to the boxA antiterminator sequence of the ribosomal RNA (rrn) operons. The sequence is that of Transcription antitermination protein NusB from Bifidobacterium longum subsp. infantis (strain ATCC 15697 / DSM 20088 / JCM 1222 / NCTC 11817 / S12).